The primary structure comprises 137 residues: Basic phospholipase A2 2 (137 aa).

Positions 1–11 (LVAVCVSLLGA) are cleaved as a signal peptide. Residues 12–19 (ANIPPQPL) constitute a propeptide that is removed on maturation. 7 disulfide bridges follow: cysteine 30–cysteine 89, cysteine 44–cysteine 136, cysteine 46–cysteine 62, cysteine 61–cysteine 117, cysteine 68–cysteine 110, cysteine 78–cysteine 103, and cysteine 96–cysteine 108. Tyrosine 45 and glycine 47 together coordinate Ca(2+). Residue tyrosine 48 participates in alpha-D-mannopyranose binding. Ca(2+) is bound at residue glycine 49. Residue histidine 65 is part of the active site. A Ca(2+)-binding site is contributed by aspartate 66. Alpha-D-mannopyranose is bound at residue aspartate 66. Residue aspartate 111 is part of the active site.

Belongs to the phospholipase A2 family. Group I subfamily. D49 sub-subfamily. In terms of assembly, homodimer; non-covalently linked. Ca(2+) is required as a cofactor. Post-translationally, homodimerization and interaction of the catalytically important Asp-49 (here Asp-111) with mannose molecules may render this protein inactive. Expressed by the venom gland.

It localises to the secreted. It catalyses the reaction a 1,2-diacyl-sn-glycero-3-phosphocholine + H2O = a 1-acyl-sn-glycero-3-phosphocholine + a fatty acid + H(+). Snake venom phospholipase A2 (PLA2) that shows anticoagulant and neurotoxic activities. Its function is as follows. PLA2 catalyzes the calcium-dependent hydrolysis of the 2-acyl groups in 3-sn-phosphoglycerides. The chain is Basic phospholipase A2 2 from Bungarus caeruleus (Indian krait).